We begin with the raw amino-acid sequence, 317 residues long: Biotin synthase (317 aa).

The Radical SAM core domain occupies 42–260 (NRIQLSTLLS…IAVTRLCMPK (219 aa)). Positions 57, 61, and 64 each coordinate [4Fe-4S] cluster. The [2Fe-2S] cluster site is built by Cys-101, Cys-132, Cys-192, and Arg-264.

This sequence belongs to the radical SAM superfamily. Biotin synthase family. As to quaternary structure, homodimer. It depends on [4Fe-4S] cluster as a cofactor. Requires [2Fe-2S] cluster as cofactor.

It carries out the reaction (4R,5S)-dethiobiotin + (sulfur carrier)-SH + 2 reduced [2Fe-2S]-[ferredoxin] + 2 S-adenosyl-L-methionine = (sulfur carrier)-H + biotin + 2 5'-deoxyadenosine + 2 L-methionine + 2 oxidized [2Fe-2S]-[ferredoxin]. Its pathway is cofactor biosynthesis; biotin biosynthesis; biotin from 7,8-diaminononanoate: step 2/2. Catalyzes the conversion of dethiobiotin (DTB) to biotin by the insertion of a sulfur atom into dethiobiotin via a radical-based mechanism. The protein is Biotin synthase of Thiobacillus denitrificans (strain ATCC 25259 / T1).